A 364-amino-acid chain; its full sequence is Dermonecrotic toxin SPH (364 aa).

A signal peptide spans 1-17; it reads MIRIFALITALAITVKC. Catalysis depends on H29, which acts as the Nucleophile. The Mg(2+) site is built by E49 and D51. H65 is an active-site residue. Cystine bridges form between C69-C75 and C71-C215. A Mg(2+)-binding site is contributed by D109.

Belongs to the arthropod phospholipase D family. Mg(2+) serves as cofactor. In terms of tissue distribution, expressed in salivary glands.

Its subcellular location is the secreted. The enzyme catalyses an N-(acyl)-sphingosylphosphocholine = an N-(acyl)-sphingosyl-1,3-cyclic phosphate + choline. It carries out the reaction an N-(acyl)-sphingosylphosphoethanolamine = an N-(acyl)-sphingosyl-1,3-cyclic phosphate + ethanolamine. It catalyses the reaction a 1-acyl-sn-glycero-3-phosphocholine = a 1-acyl-sn-glycero-2,3-cyclic phosphate + choline. The catalysed reaction is a 1-acyl-sn-glycero-3-phosphoethanolamine = a 1-acyl-sn-glycero-2,3-cyclic phosphate + ethanolamine. In terms of biological role, dermonecrotic toxins cleave the phosphodiester linkage between the phosphate and headgroup of certain phospholipids (sphingolipid and lysolipid substrates), forming an alcohol (often choline) and a cyclic phosphate. Acts on sphingomyelin (SM). It may also act on ceramide phosphoethanolamine (CPE), lysophosphatidylcholine (LPC) and lysophosphatidylethanolamine (LPE), but not on lysophosphatidylserine (LPS), and lysophosphatidylglycerol (LPG). It acts by transphosphatidylation, releasing exclusively cyclic phosphate products as second products. Induces dermonecrosis, hemolysis, increased vascular permeability, edema, inflammatory response, and platelet aggregation. This chain is Dermonecrotic toxin SPH (SPH), found in Ixodes scapularis (Black-legged tick).